Here is a 132-residue protein sequence, read N- to C-terminus: Small ribosomal subunit protein uS8 (132 aa).

This sequence belongs to the universal ribosomal protein uS8 family. As to quaternary structure, part of the 30S ribosomal subunit. Contacts proteins S5 and S12.

Functionally, one of the primary rRNA binding proteins, it binds directly to 16S rRNA central domain where it helps coordinate assembly of the platform of the 30S subunit. The chain is Small ribosomal subunit protein uS8 from Rhodopseudomonas palustris (strain BisB18).